We begin with the raw amino-acid sequence, 558 residues long: MAKLLSCVLGPRLYKIYRERDSERAPASVPETPTAVTAPHSSSWDTYYQPRALEKHADSILALASVFWSISYYSSPFAFFYLYRKGYLSLSKVVPFSHYAGTLLLLLAGVACLRGIGRWTNPQYRQFITILEATHRNQSSENKRQLANYNFDFRSWPVDFHWEEPSSRKESRGGPSRQGVALLRPEPLHRGTADTLLNRVKKLPCQITSYLVAHTLGRRMLYPGSVYLLQKALMPVLLQGQARLVEECNGRRAKLLACDGNEIDTMFVDRRGTAEPQGQKLVICCEGNAGFYEVGCVSTPLEAGYSVLGWNHPGFAGSTGVPFPQNEANAMDVVVQFAIHRLGFQPQDIIIYAWSIGGFTATWAAMSYPDVSAVILDASFDDLVPLALKVMPDSWRGLVTRTVRQHLNLNNAEQLCRYQGPVLLIRRTKDEIITTTVPEDIMSNRGNDLLLKLLQHRYPRVMAEEGLRVVRQWLEASSQLEEASIYSRWEVEEDWCLSVLRSYQAEHGPDFPWSVGEDMSADGRRQLALFLARKHLHNFEATHCTPLPAQNFQMPWHL.

Helical transmembrane passes span 60 to 80 and 93 to 113; these read ILAL…FAFF and VVPF…VACL. Over 114-558 the chain is Cytoplasmic; that stretch reads RGIGRWTNPQ…AQNFQMPWHL (445 aa). The AB hydrolase-1 domain maps to 281-407; it reads LVICCEGNAG…LVTRTVRQHL (127 aa). Active-site charge relay system residues include Ser355, Asp430, and His507.

The protein belongs to the AB hydrolase superfamily. ABHD16 family.

It localises to the membrane. It carries out the reaction 1-heptadecanoyl-2-(5Z,8Z,11Z,14Z-eicosatetraenoyl)-sn-glycero-3-phosphoserine + H2O = 1-heptadecanoyl-sn-glycero-3-phosphoserine + (5Z,8Z,11Z,14Z)-eicosatetraenoate + H(+). It catalyses the reaction 1-hexadecanoyl-2-(9Z-octadecenoyl)-sn-glycero-3-phospho-L-serine + H2O = 1-hexadecanoyl-sn-glycero-3-phospho-L-serine + (9Z)-octadecenoate + H(+). The enzyme catalyses 1-octadecanoyl-2-(9Z,12Z-octadecadienoyl)-sn-glycero-3-phosphoserine + H2O = 1-octadecanoyl-sn-glycero-3-phosphoserine + (9Z,12Z)-octadecadienoate + H(+). The catalysed reaction is 1-heptadecanoyl-2-(5Z,8Z,11Z,14Z-eicosatetraenoyl)-sn-glycero-3-phosphocholine + H2O = 1-heptadecanoyl-sn-glycero-3-phosphocholine + (5Z,8Z,11Z,14Z)-eicosatetraenoate + H(+). It carries out the reaction 1-hexadecanoyl-2-(9Z-octadecenoyl)-sn-glycero-3-phosphoglycerol + H2O = 1-hexadecanoyl-sn-glycero-3-phosphoglycerol + (9Z)-octadecenoate + H(+). It catalyses the reaction 1-hexadecanoyl-2-(9Z-octadecenoyl)-sn-glycero-3-phospho-(1D-myo-inositol) + H2O = 1-hexadecanoyl-sn-glycero-3-phospho-(1D-myo-inositol) + (9Z)-octadecenoate + H(+). The enzyme catalyses 1-heptadecanoyl-2-(5Z,8Z,11Z,14Z-eicosatetraenoyl)-sn-glycero-3-phosphoethanolamine + H2O = 1-heptadecanoyl-sn-glycero-3-phosphoethanolamine + (5Z,8Z,11Z,14Z)-eicosatetraenoate + H(+). The catalysed reaction is 1-hexadecanoyl-2-(9Z-octadecenoyl)-sn-glycero-3-phospho-(1'-sn-glycerol) + H2O = 1-hexadecanoyl-sn-glycero-3-phospho-(1'-sn-glycerol) + (9Z)-octadecenoate + H(+). It carries out the reaction Hydrolyzes glycerol monoesters of long-chain fatty acids.. It catalyses the reaction 1-tetradecanoylglycerol + H2O = tetradecanoate + glycerol + H(+). The enzyme catalyses 2-hexadecanoylglycerol + H2O = glycerol + hexadecanoate + H(+). The catalysed reaction is 1-(9Z-octadecenoyl)-glycerol + H2O = glycerol + (9Z)-octadecenoate + H(+). It carries out the reaction 2-(9Z-octadecenoyl)-glycerol + H2O = glycerol + (9Z)-octadecenoate + H(+). It catalyses the reaction 2-(9Z,12Z-octadecadienoyl)-glycerol + H2O = (9Z,12Z)-octadecadienoate + glycerol + H(+). The enzyme catalyses 1-(5Z,8Z,11Z,14Z-eicosatetraenoyl)-glycerol + H2O = glycerol + (5Z,8Z,11Z,14Z)-eicosatetraenoate + H(+). The catalysed reaction is 2-(5Z,8Z,11Z,14Z-eicosatetraenoyl)-glycerol + H2O = glycerol + (5Z,8Z,11Z,14Z)-eicosatetraenoate + H(+). It carries out the reaction prostaglandin D2-1-glycerol ester + H2O = prostaglandin D2 + glycerol + H(+). It catalyses the reaction 2-glyceryl-15-deoxy-Delta(12,14)-prostaglandin J2 + H2O = 15-deoxy-Delta(12,14)-prostaglandin J2 + glycerol + H(+). The enzyme catalyses 1-(9Z,12Z-octadecadienoyl)-glycerol + H2O = (9Z,12Z)-octadecadienoate + glycerol + H(+). Its function is as follows. Phosphatidylserine (PS) lipase that mediates the hydrolysis of phosphatidylserine to generate lysophosphatidylserine (LPS). LPS constitutes a class of signaling lipids that regulates immunological and neurological processes. Has no activity towards diacylglycerol, triacylglycerol or lysophosphatidylserine lipase. Also has monoacylglycerol lipase activity, with preference for 1-(9Z,12Z-octadecadienoyl)-glycerol (1-LG) and 2-glyceryl-15-deoxy-Delta(12,14)-prostaglandin J2 (15d-PGJ(2)-G). In Pongo abelii (Sumatran orangutan), this protein is Phosphatidylserine lipase ABHD16A.